Consider the following 593-residue polypeptide: Mitoguardin 2 (593 aa).

Helical transmembrane passes span 11–31 (MIQALAMTVAEIPVFLYTTFG) and 42–62 (PGLRKVLFATALGTVALALAA). 2 disordered regions span residues 103–141 (GYSSRRVQSPSSKSNDTLSGISSIEPSKHSGSSHSVASM) and 196–231 (SVGQRGDSGSTPMPRDGLRNPETASEPLSEPESQRK). Low complexity-rich tracts occupy residues 106–116 (SRRVQSPSSKS) and 123–141 (ISSIEPSKHSGSSHSVASM). Position 132 is a phosphoserine (Ser-132). Phosphothreonine is present on Thr-206. 3 positions are modified to phosphoserine: Ser-220, Ser-224, and Ser-228. At Thr-273 the chain carries Phosphothreonine. Ser-276 and Ser-295 each carry phosphoserine. The short motif at 292-298 (SFFSATE) is the FFAT element.

It belongs to the mitoguardin family. As to quaternary structure, homodimer and heterodimer; forms heterodimers with MIGA1. Interacts with PLD6/MitoPLD. Interacts (via phosphorylated FFAT motif) with MOSPD2, VAPA and VAPB. Post-translationally, phosphorylation at Ser-295 of the FFAT motif activates interaction with MOSPD2, VAPA and VAPB.

The protein localises to the mitochondrion outer membrane. Regulator of mitochondrial fusion: acts by forming homo- and heterodimers at the mitochondrial outer membrane and facilitating the formation of PLD6/MitoPLD dimers. May act by regulating phospholipid metabolism via PLD6/MitoPLD. The sequence is that of Mitoguardin 2 from Homo sapiens (Human).